Here is a 350-residue protein sequence, read N- to C-terminus: 4-hydroxy-3-methylbut-2-en-1-yl diphosphate synthase (flavodoxin) (350 aa).

Residues cysteine 263, cysteine 266, cysteine 298, and glutamate 305 each coordinate [4Fe-4S] cluster.

Belongs to the IspG family. Requires [4Fe-4S] cluster as cofactor.

The enzyme catalyses (2E)-4-hydroxy-3-methylbut-2-enyl diphosphate + oxidized [flavodoxin] + H2O + 2 H(+) = 2-C-methyl-D-erythritol 2,4-cyclic diphosphate + reduced [flavodoxin]. Its pathway is isoprenoid biosynthesis; isopentenyl diphosphate biosynthesis via DXP pathway; isopentenyl diphosphate from 1-deoxy-D-xylulose 5-phosphate: step 5/6. Its function is as follows. Converts 2C-methyl-D-erythritol 2,4-cyclodiphosphate (ME-2,4cPP) into 1-hydroxy-2-methyl-2-(E)-butenyl 4-diphosphate. The polypeptide is 4-hydroxy-3-methylbut-2-en-1-yl diphosphate synthase (flavodoxin) (Nautilia profundicola (strain ATCC BAA-1463 / DSM 18972 / AmH)).